The following is a 209-amino-acid chain: Orotate phosphoribosyltransferase (209 aa).

5-phospho-alpha-D-ribose 1-diphosphate-binding positions include R96, K100, H102, and 122–130 (EDLISTGGS). S126 is an orotate binding site.

The protein belongs to the purine/pyrimidine phosphoribosyltransferase family. PyrE subfamily. As to quaternary structure, homodimer. Requires Mg(2+) as cofactor.

The enzyme catalyses orotidine 5'-phosphate + diphosphate = orotate + 5-phospho-alpha-D-ribose 1-diphosphate. It functions in the pathway pyrimidine metabolism; UMP biosynthesis via de novo pathway; UMP from orotate: step 1/2. In terms of biological role, catalyzes the transfer of a ribosyl phosphate group from 5-phosphoribose 1-diphosphate to orotate, leading to the formation of orotidine monophosphate (OMP). In Streptococcus agalactiae serotype Ia (strain ATCC 27591 / A909 / CDC SS700), this protein is Orotate phosphoribosyltransferase.